The primary structure comprises 208 residues: Uracil phosphoribosyltransferase (208 aa).

5-phospho-alpha-D-ribose 1-diphosphate is bound by residues R78, R103, and D130–S138. Residues I193 and G198 to A200 each bind uracil. Residue D199 participates in 5-phospho-alpha-D-ribose 1-diphosphate binding.

The protein belongs to the UPRTase family. Requires Mg(2+) as cofactor.

The enzyme catalyses UMP + diphosphate = 5-phospho-alpha-D-ribose 1-diphosphate + uracil. It participates in pyrimidine metabolism; UMP biosynthesis via salvage pathway; UMP from uracil: step 1/1. With respect to regulation, allosterically activated by GTP. Functionally, catalyzes the conversion of uracil and 5-phospho-alpha-D-ribose 1-diphosphate (PRPP) to UMP and diphosphate. The polypeptide is Uracil phosphoribosyltransferase (Haemophilus ducreyi (strain 35000HP / ATCC 700724)).